The chain runs to 257 residues: Small ribosomal subunit protein uS2 (257 aa).

The protein belongs to the universal ribosomal protein uS2 family.

This chain is Small ribosomal subunit protein uS2, found in Bartonella henselae (strain ATCC 49882 / DSM 28221 / CCUG 30454 / Houston 1) (Rochalimaea henselae).